Here is a 304-residue protein sequence, read N- to C-terminus: Methionyl-tRNA formyltransferase (304 aa).

A (6S)-5,6,7,8-tetrahydrofolate-binding site is contributed by 109–112 (SDLP).

Belongs to the Fmt family.

It carries out the reaction L-methionyl-tRNA(fMet) + (6R)-10-formyltetrahydrofolate = N-formyl-L-methionyl-tRNA(fMet) + (6S)-5,6,7,8-tetrahydrofolate + H(+). Attaches a formyl group to the free amino group of methionyl-tRNA(fMet). The formyl group appears to play a dual role in the initiator identity of N-formylmethionyl-tRNA by promoting its recognition by IF2 and preventing the misappropriation of this tRNA by the elongation apparatus. The protein is Methionyl-tRNA formyltransferase of Rickettsia bellii (strain RML369-C).